We begin with the raw amino-acid sequence, 157 residues long: SsrA-binding protein (157 aa).

The segment at 133-157 (HDKRNSIKEREGKREVERALKSRSR) is disordered.

It belongs to the SmpB family.

It is found in the cytoplasm. Functionally, required for rescue of stalled ribosomes mediated by trans-translation. Binds to transfer-messenger RNA (tmRNA), required for stable association of tmRNA with ribosomes. tmRNA and SmpB together mimic tRNA shape, replacing the anticodon stem-loop with SmpB. tmRNA is encoded by the ssrA gene; the 2 termini fold to resemble tRNA(Ala) and it encodes a 'tag peptide', a short internal open reading frame. During trans-translation Ala-aminoacylated tmRNA acts like a tRNA, entering the A-site of stalled ribosomes, displacing the stalled mRNA. The ribosome then switches to translate the ORF on the tmRNA; the nascent peptide is terminated with the 'tag peptide' encoded by the tmRNA and targeted for degradation. The ribosome is freed to recommence translation, which seems to be the essential function of trans-translation. In Verminephrobacter eiseniae (strain EF01-2), this protein is SsrA-binding protein.